The primary structure comprises 158 residues: Small ribosomal subunit protein uS17 (158 aa).

A2 carries the N-acetylalanine modification. R22 is subject to Citrulline. N6-acetyllysine is present on residues K38, K45, and K58. C60 carries S-palmitoyl cysteine lipidation. S67 is modified (phosphoserine). R69 is subject to Omega-N-methylarginine. A Phosphoserine modification is found at S110.

This sequence belongs to the universal ribosomal protein uS17 family. As to quaternary structure, component of the small ribosomal subunit. Part of the small subunit (SSU) processome, composed of more than 70 proteins and the RNA chaperone small nucleolar RNA (snoRNA) U3. Citrullinated by PADI4.

It localises to the cytoplasm. The protein resides in the nucleus. Its subcellular location is the nucleolus. Its function is as follows. Component of the small ribosomal subunit. The ribosome is a large ribonucleoprotein complex responsible for the synthesis of proteins in the cell. Part of the small subunit (SSU) processome, first precursor of the small eukaryotic ribosomal subunit. During the assembly of the SSU processome in the nucleolus, many ribosome biogenesis factors, an RNA chaperone and ribosomal proteins associate with the nascent pre-rRNA and work in concert to generate RNA folding, modifications, rearrangements and cleavage as well as targeted degradation of pre-ribosomal RNA by the RNA exosome. The chain is Small ribosomal subunit protein uS17 (RPS11) from Canis lupus familiaris (Dog).